The sequence spans 678 residues: Alpha-L-arabinofuranosidase 1 (678 aa).

A signal peptide spans 1–33 (MDMESWKLLRSVCVLSFLLGSCFVYQSLRVVDA). The region spanning 152-239 (NIEEGKKYKV…WIDQVSAMPV (88 aa)) is the CBM-cenC domain. Residues Asn181, Asn362, Asn523, and Asn555 are each glycosylated (N-linked (GlcNAc...) asparagine).

This sequence belongs to the glycosyl hydrolase 51 family. In terms of tissue distribution, expressed in roots, leaves, flowers, stems, siliques and seedlings. Observed in zones of cell proliferation, the vascular system and floral abscission zones. Expressed in the guard cells in stems, in xylem vessels and parenchyma cells surrounding the vessels, in the cambium and in the phloem, but not in the secondary xylem.

The protein resides in the secreted. The protein localises to the extracellular space. It is found in the extracellular matrix. The enzyme catalyses Hydrolysis of terminal non-reducing alpha-L-arabinofuranoside residues in alpha-L-arabinosides.. May be involved in the coordinated dissolution of the cell wall matrix during abscission and in the secondary cell wall formation in xylem vessels. Prefers arabinoxylan, but may also use pectic arabinans as substrates. The polypeptide is Alpha-L-arabinofuranosidase 1 (ASD1) (Arabidopsis thaliana (Mouse-ear cress)).